Reading from the N-terminus, the 170-residue chain is Adenine phosphoribosyltransferase (170 aa).

Belongs to the purine/pyrimidine phosphoribosyltransferase family. As to quaternary structure, homodimer.

Its subcellular location is the cytoplasm. The enzyme catalyses AMP + diphosphate = 5-phospho-alpha-D-ribose 1-diphosphate + adenine. It functions in the pathway purine metabolism; AMP biosynthesis via salvage pathway; AMP from adenine: step 1/1. In terms of biological role, catalyzes a salvage reaction resulting in the formation of AMP, that is energically less costly than de novo synthesis. This is Adenine phosphoribosyltransferase from Lactococcus lactis subsp. lactis (strain IL1403) (Streptococcus lactis).